A 147-amino-acid polypeptide reads, in one-letter code: Nucleoside diphosphate kinase (147 aa).

ATP-binding residues include Lys-9, Phe-57, Arg-85, Thr-91, Arg-102, and Asn-112. Residue His-115 is the Pros-phosphohistidine intermediate of the active site.

The protein belongs to the NDK family. As to quaternary structure, homotetramer. Requires Mg(2+) as cofactor.

The protein localises to the cytoplasm. It catalyses the reaction a 2'-deoxyribonucleoside 5'-diphosphate + ATP = a 2'-deoxyribonucleoside 5'-triphosphate + ADP. The enzyme catalyses a ribonucleoside 5'-diphosphate + ATP = a ribonucleoside 5'-triphosphate + ADP. Functionally, major role in the synthesis of nucleoside triphosphates other than ATP. The ATP gamma phosphate is transferred to the NDP beta phosphate via a ping-pong mechanism, using a phosphorylated active-site intermediate. This chain is Nucleoside diphosphate kinase, found in Brevibacillus brevis (strain 47 / JCM 6285 / NBRC 100599).